We begin with the raw amino-acid sequence, 84 residues long: uncharacterized protein (84 aa).

This is an uncharacterized protein from Micrococcus luteus (Micrococcus lysodeikticus).